The following is a 314-amino-acid chain: tRNA pseudouridine synthase B (314 aa).

Asp-54 serves as the catalytic Nucleophile.

Belongs to the pseudouridine synthase TruB family. Type 1 subfamily.

It carries out the reaction uridine(55) in tRNA = pseudouridine(55) in tRNA. In terms of biological role, responsible for synthesis of pseudouridine from uracil-55 in the psi GC loop of transfer RNAs. This Ralstonia nicotianae (strain ATCC BAA-1114 / GMI1000) (Ralstonia solanacearum) protein is tRNA pseudouridine synthase B.